Reading from the N-terminus, the 134-residue chain is Fluoride-specific ion channel FluC 2 (134 aa).

Helical transmembrane passes span 1–21 (MNYF…EITG), 28–48 (IFPV…LFFM), 68–88 (GFLG…LLLF), and 92–112 (LLIG…SGIL). Positions 71 and 74 each coordinate Na(+).

It belongs to the fluoride channel Fluc/FEX (TC 1.A.43) family.

It localises to the cell membrane. It catalyses the reaction fluoride(in) = fluoride(out). With respect to regulation, na(+) is not transported, but it plays an essential structural role and its presence is essential for fluoride channel function. In terms of biological role, fluoride-specific ion channel. Important for reducing fluoride concentration in the cell, thus reducing its toxicity. In Carboxydothermus hydrogenoformans (strain ATCC BAA-161 / DSM 6008 / Z-2901), this protein is Fluoride-specific ion channel FluC 2.